The sequence spans 333 residues: DNA-directed RNA polymerase subunit alpha (333 aa).

The segment at 1-235 (MQTNLLKPKA…EQLAVFAQLE (235 aa)) is alpha N-terminal domain (alpha-NTD). An alpha C-terminal domain (alpha-CTD) region spans residues 253–333 (FDPILLRPVD…NWPPQGLDKR (81 aa)).

Belongs to the RNA polymerase alpha chain family. Homodimer. The RNAP catalytic core consists of 2 alpha, 1 beta, 1 beta' and 1 omega subunit. When a sigma factor is associated with the core the holoenzyme is formed, which can initiate transcription.

The enzyme catalyses RNA(n) + a ribonucleoside 5'-triphosphate = RNA(n+1) + diphosphate. Functionally, DNA-dependent RNA polymerase catalyzes the transcription of DNA into RNA using the four ribonucleoside triphosphates as substrates. In Methylibium petroleiphilum (strain ATCC BAA-1232 / LMG 22953 / PM1), this protein is DNA-directed RNA polymerase subunit alpha.